A 398-amino-acid polypeptide reads, in one-letter code: 4-hydroxy-3-methylbut-2-enyl diphosphate reductase (398 aa).

Cysteine 66 is a [4Fe-4S] cluster binding site. Histidine 96 lines the (2E)-4-hydroxy-3-methylbut-2-enyl diphosphate pocket. Histidine 96 is a binding site for dimethylallyl diphosphate. Histidine 96 provides a ligand contact to isopentenyl diphosphate. Cysteine 157 contacts [4Fe-4S] cluster. Position 185 (histidine 185) interacts with (2E)-4-hydroxy-3-methylbut-2-enyl diphosphate. Histidine 185 lines the dimethylallyl diphosphate pocket. Histidine 185 contacts isopentenyl diphosphate. Glutamate 187 acts as the Proton donor in catalysis. (2E)-4-hydroxy-3-methylbut-2-enyl diphosphate is bound at residue threonine 250. Residue cysteine 288 coordinates [4Fe-4S] cluster. (2E)-4-hydroxy-3-methylbut-2-enyl diphosphate is bound by residues serine 317, serine 318, asparagine 319, and serine 380. Dimethylallyl diphosphate contacts are provided by serine 317, serine 318, asparagine 319, and serine 380. Isopentenyl diphosphate-binding residues include serine 317, serine 318, asparagine 319, and serine 380.

The protein belongs to the IspH family. The cofactor is [4Fe-4S] cluster.

It catalyses the reaction isopentenyl diphosphate + 2 oxidized [2Fe-2S]-[ferredoxin] + H2O = (2E)-4-hydroxy-3-methylbut-2-enyl diphosphate + 2 reduced [2Fe-2S]-[ferredoxin] + 2 H(+). The catalysed reaction is dimethylallyl diphosphate + 2 oxidized [2Fe-2S]-[ferredoxin] + H2O = (2E)-4-hydroxy-3-methylbut-2-enyl diphosphate + 2 reduced [2Fe-2S]-[ferredoxin] + 2 H(+). It participates in isoprenoid biosynthesis; dimethylallyl diphosphate biosynthesis; dimethylallyl diphosphate from (2E)-4-hydroxy-3-methylbutenyl diphosphate: step 1/1. It functions in the pathway isoprenoid biosynthesis; isopentenyl diphosphate biosynthesis via DXP pathway; isopentenyl diphosphate from 1-deoxy-D-xylulose 5-phosphate: step 6/6. In terms of biological role, catalyzes the conversion of 1-hydroxy-2-methyl-2-(E)-butenyl 4-diphosphate (HMBPP) into a mixture of isopentenyl diphosphate (IPP) and dimethylallyl diphosphate (DMAPP). Acts in the terminal step of the DOXP/MEP pathway for isoprenoid precursor biosynthesis. In Prochlorococcus marinus subsp. pastoris (strain CCMP1986 / NIES-2087 / MED4), this protein is 4-hydroxy-3-methylbut-2-enyl diphosphate reductase.